The chain runs to 481 residues: Cerebral cavernous malformations 2 protein-like (481 aa).

Disordered stretches follow at residues 161–193 and 214–290; these read PVPA…GTAE and EARA…DPQN. Residues 184–193 show a composition bias toward basic and acidic residues; sequence PEKRRVGTAE. The span at 214–223 shows a compositional bias: gly residues; the sequence is EARAAGGGGS. Residues 237-251 are compositionally biased toward basic and acidic residues; the sequence is WERRQTFSGSWERRH.

This sequence belongs to the CCM2 family.

The sequence is that of Cerebral cavernous malformations 2 protein-like (Ccm2l) from Mus musculus (Mouse).